The following is a 1927-amino-acid chain: Lactase/phlorizin hydrolase (1927 aa).

An N-terminal signal peptide occupies residues 1-19; the sequence is MELSWHVVFIALLSFSCWG. Residues 20–868 constitute a propeptide, XBetaGly; it reads SDWESDRNFI…NTVNLPSKVR (849 aa). The Extracellular portion of the chain corresponds to 20–1882; sequence SDWESDRNFI…LMLGTTEAQT (1863 aa). N-linked (GlcNAc...) asparagine glycosylation occurs at N42. A glycosyl hydrolase-1 1; Region I region spans residues 44 to 286; sequence SGLLGDQSSN…FIFNLKLPDC (243 aa). Residues 362–855 form a glycosyl hydrolase-1 2; Region II region; sequence IWEAFANQSR…GFLTKGAKRL (494 aa). Residues N368, N418, N512, N821, N934, N946, and N989 are each glycosylated (N-linked (GlcNAc...) asparagine). Residues 902-1366 form a glycosyl hydrolase-1 3; Region III. Phlorizin hydrolase/glycosylceramidase activity region; the sequence is TFRDDFLWGV…EVITNNGMPL (465 aa). Catalysis depends on E1065, which acts as the Proton donor; for phlorizin hydrolase/Glycosylceramidase activity. Residue N1174 is glycosylated (N-linked (GlcNAc...) asparagine). The segment at 1220 to 1244 is disordered; that stretch reads RLNPPSYEDDQEMAEEEDPSWPSTA. Residues 1226–1238 show a composition bias toward acidic residues; it reads YEDDQEMAEEEDP. E1273 acts as the Nucleophile; for phlorizin hydrolase/Glycosylceramidase activity in catalysis. N-linked (GlcNAc...) asparagine glycans are attached at residues N1340 and N1508. The glycosyl hydrolase-1 4; Region IV. Lactase activity stretch occupies residues 1373–1846; the sequence is LYGRFPEGFI…CNGFPDPATG (474 aa). Residue E1538 is the Proton donor; for lactase activity of the active site. The tract at residues 1647–1927 is required for homodimerization and transport to the plasma membrane; the sequence is RDRSLAAGLN…QQELSPVSSF (281 aa). N-linked (GlcNAc...) asparagine glycans are attached at residues N1656 and N1672. E1749 (nucleophile; for lactase activity) is an active-site residue. N1761 and N1814 each carry an N-linked (GlcNAc...) asparagine glycan. Residues 1883–1901 traverse the membrane as a helical segment; it reads ALYVLFSLVLLGVCGLAFL. Over 1902–1927 the chain is Cytoplasmic; the sequence is SYKYCKRSKQGKTQRSQQELSPVSSF.

It belongs to the glycosyl hydrolase 1 family. As to quaternary structure, homodimer. N-glycosylated. In terms of tissue distribution, specifically expressed in small intestine.

Its subcellular location is the apical cell membrane. The enzyme catalyses lactose + H2O = beta-D-galactose + D-glucose. The catalysed reaction is phlorizin + H2O = phloretin + beta-D-glucose. It catalyses the reaction D-cellobiose + H2O = beta-D-glucose + D-glucose. It carries out the reaction quercetin 4'-O-beta-D-glucoside + H2O = quercetin + beta-D-glucose. The enzyme catalyses quercetin 3-O-beta-D-glucoside + H2O = quercetin + beta-D-glucose. The catalysed reaction is kaempferol 3-O-beta-D-glucoside + H2O = kaempferol + beta-D-glucose. It catalyses the reaction luteolin 7-O-beta-D-glucoside + H2O = luteolin + beta-D-glucose. It carries out the reaction luteolin 4'-O-beta-D-glucoside + H2O = luteolin + beta-D-glucose. The enzyme catalyses (2S)-naringenin 7-O-beta-D-glucoside + H2O = (2S)-naringenin + beta-D-glucose. The catalysed reaction is eriodictyol-7-O-beta-D-glucoside + H2O = (S)-eriodictyol + beta-D-glucose. It catalyses the reaction apigenin 7-O-beta-D-glucoside + H2O = apigenin + beta-D-glucose. It carries out the reaction daidzein 7-O-beta-D-glucoside + H2O = daidzein + beta-D-glucose + H(+). The enzyme catalyses genistein 7-O-beta-D-glucoside + H2O = genistein + beta-D-glucose. The catalysed reaction is a beta-D-galactosyl-N-acylsphingosine + H2O = a ceramide + beta-D-galactose.. It catalyses the reaction beta-D-glucosyl-(1&lt;-&gt;1')-N-hexadecanoylsphing-4-enine + H2O = N-hexadecanoylsphing-4-enine + beta-D-glucose. It carries out the reaction beta-D-galactosyl-(1&lt;-&gt;1')-N-hexadecanoylsphing-4-enine + H2O = beta-D-galactose + N-hexadecanoylsphing-4-enine. The enzyme catalyses beta-D-galactosyl-(1&lt;-&gt;1')-N-hexadecanoylsphinganine + H2O = N-hexadecanoylsphinganine + beta-D-galactose. The catalysed reaction is beta-D-glucosyl-(1&lt;-&gt;1')-N-hexadecanoylsphinganine + H2O = N-hexadecanoylsphinganine + beta-D-glucose. Its function is as follows. Broad specificity glycosidase of the intestinal brush border membrane that hydrolyzes lactose, the main sugar in mammalian milk, to produce D-glucose and D-galactose. The mature protein is composed of two domains that catalyze the hydrolysis of beta-glucopyranosides and beta-galactopyranosides, with a preference for hydrophilic aglycones (in lactose and cellobiose) for one domain and hydrophobic aglycones (in phlorizin and glycosylceramides) for the other. In Homo sapiens (Human), this protein is Lactase/phlorizin hydrolase.